A 310-amino-acid polypeptide reads, in one-letter code: ADP-L-glycero-D-manno-heptose-6-epimerase (310 aa).

NADP(+)-binding positions include 10–11, 31–32, Lys-38, Lys-53, 75–79, and Asn-92; these read FI, DN, and EGACS. The active-site Proton acceptor is the Tyr-140. Lys-144 lines the NADP(+) pocket. Substrate is bound at residue Asn-169. 2 residues coordinate NADP(+): Val-170 and Lys-178. Lys-178 (proton acceptor) is an active-site residue. Substrate is bound by residues Ser-180, His-187, 201-204, Arg-209, and Tyr-272; that span reads FEGS.

This sequence belongs to the NAD(P)-dependent epimerase/dehydratase family. HldD subfamily. Homopentamer. The cofactor is NADP(+).

The enzyme catalyses ADP-D-glycero-beta-D-manno-heptose = ADP-L-glycero-beta-D-manno-heptose. Its pathway is nucleotide-sugar biosynthesis; ADP-L-glycero-beta-D-manno-heptose biosynthesis; ADP-L-glycero-beta-D-manno-heptose from D-glycero-beta-D-manno-heptose 7-phosphate: step 4/4. In terms of biological role, catalyzes the interconversion between ADP-D-glycero-beta-D-manno-heptose and ADP-L-glycero-beta-D-manno-heptose via an epimerization at carbon 6 of the heptose. In Cronobacter sakazakii (strain ATCC BAA-894) (Enterobacter sakazakii), this protein is ADP-L-glycero-D-manno-heptose-6-epimerase.